The following is a 156-amino-acid chain: 6,7-dimethyl-8-ribityllumazine synthase (156 aa).

5-amino-6-(D-ribitylamino)uracil is bound by residues F25, 59–61 (AWE), and 83–85 (AVI). 88–89 (ST) provides a ligand contact to (2S)-2-hydroxy-3-oxobutyl phosphate. H91 serves as the catalytic Proton donor. Position 116 (N116) interacts with 5-amino-6-(D-ribitylamino)uracil. R130 provides a ligand contact to (2S)-2-hydroxy-3-oxobutyl phosphate.

Belongs to the DMRL synthase family. As to quaternary structure, forms an icosahedral capsid composed of 60 subunits, arranged as a dodecamer of pentamers.

The enzyme catalyses (2S)-2-hydroxy-3-oxobutyl phosphate + 5-amino-6-(D-ribitylamino)uracil = 6,7-dimethyl-8-(1-D-ribityl)lumazine + phosphate + 2 H2O + H(+). It functions in the pathway cofactor biosynthesis; riboflavin biosynthesis; riboflavin from 2-hydroxy-3-oxobutyl phosphate and 5-amino-6-(D-ribitylamino)uracil: step 1/2. Functionally, catalyzes the formation of 6,7-dimethyl-8-ribityllumazine by condensation of 5-amino-6-(D-ribitylamino)uracil with 3,4-dihydroxy-2-butanone 4-phosphate. This is the penultimate step in the biosynthesis of riboflavin. This Acinetobacter baumannii (strain AB0057) protein is 6,7-dimethyl-8-ribityllumazine synthase.